The following is a 263-amino-acid chain: Endonuclease 8 (263 aa).

Residue Pro2 is the Schiff-base intermediate with DNA of the active site. Glu3 functions as the Proton donor in the catalytic mechanism. The active-site Proton donor; for beta-elimination activity is the Lys53. The DNA site is built by Gln70, Arg125, and Asn169. An FPG-type zinc finger spans residues 229 to 263 (KVFHRDGELCERCGGIIEKTTLSSRPFYWCPGCQH). Arg253 functions as the Proton donor; for delta-elimination activity in the catalytic mechanism.

It belongs to the FPG family. Zn(2+) serves as cofactor.

It catalyses the reaction 2'-deoxyribonucleotide-(2'-deoxyribose 5'-phosphate)-2'-deoxyribonucleotide-DNA = a 3'-end 2'-deoxyribonucleotide-(2,3-dehydro-2,3-deoxyribose 5'-phosphate)-DNA + a 5'-end 5'-phospho-2'-deoxyribonucleoside-DNA + H(+). Its function is as follows. Involved in base excision repair of DNA damaged by oxidation or by mutagenic agents. Acts as a DNA glycosylase that recognizes and removes damaged bases. Has a preference for oxidized pyrimidines, such as thymine glycol, 5,6-dihydrouracil and 5,6-dihydrothymine. Has AP (apurinic/apyrimidinic) lyase activity and introduces nicks in the DNA strand. Cleaves the DNA backbone by beta-delta elimination to generate a single-strand break at the site of the removed base with both 3'- and 5'-phosphates. In Shigella flexneri serotype 5b (strain 8401), this protein is Endonuclease 8.